We begin with the raw amino-acid sequence, 219 residues long: NAD(P)H-quinone oxidoreductase subunit I (219 aa).

4Fe-4S ferredoxin-type domains follow at residues 55-84 (GRIH…VDWV) and 95-124 (RNYS…MTEE). [4Fe-4S] cluster contacts are provided by C64, C67, C70, C74, C104, C107, C110, and C114. The interval 192–219 (LKAAGSMKAAEDERESSSSASNMEESAG) is disordered. The span at 208–219 (SSSASNMEESAG) shows a compositional bias: low complexity.

The protein belongs to the complex I 23 kDa subunit family. As to quaternary structure, NDH-1 is composed of at least 11 different subunits. [4Fe-4S] cluster serves as cofactor.

The protein resides in the cellular thylakoid membrane. It carries out the reaction a plastoquinone + NADH + (n+1) H(+)(in) = a plastoquinol + NAD(+) + n H(+)(out). It catalyses the reaction a plastoquinone + NADPH + (n+1) H(+)(in) = a plastoquinol + NADP(+) + n H(+)(out). NDH-1 shuttles electrons from an unknown electron donor, via FMN and iron-sulfur (Fe-S) centers, to quinones in the respiratory and/or the photosynthetic chain. The immediate electron acceptor for the enzyme in this species is believed to be plastoquinone. Couples the redox reaction to proton translocation, and thus conserves the redox energy in a proton gradient. The chain is NAD(P)H-quinone oxidoreductase subunit I from Synechococcus sp. (strain CC9311).